Reading from the N-terminus, the 367-residue chain is Glycolate oxidase 1 (367 aa).

Met-1 is modified (N-acetylmethionine). Residue Tyr-24 participates in glyoxylate binding. FMN contacts are provided by residues 77 to 79 (PTA), Ser-106, 127 to 129 (QLY), and Thr-155. Residue Tyr-129 coordinates glyoxylate. Residue Arg-164 participates in glyoxylate binding. The FMN site is built by Lys-230 and Ser-252. Residues His-254 and Arg-257 each coordinate glyoxylate. The Proton acceptor role is filled by His-254. FMN contacts are provided by residues 285-289 (DGGVR) and 308-309 (GR).

Belongs to the FMN-dependent alpha-hydroxy acid dehydrogenase family. As to quaternary structure, homotetramer. Requires FMN as cofactor.

The protein localises to the peroxisome. It carries out the reaction glycolate + O2 = glyoxylate + H2O2. It functions in the pathway photosynthesis; photorespiration; glycine from 2-phosphoglycolate: step 2/3. Catalyzes the oxidation of glycolate to glyoxylate, with a reduction of O2 to H2O2. Is a key enzyme in photorespiration in green plants. The chain is Glycolate oxidase 1 (GLO1) from Arabidopsis thaliana (Mouse-ear cress).